A 457-amino-acid chain; its full sequence is UPF0328 protein ECU05_0030 (457 aa).

Disordered stretches follow at residues 1–112 and 157–183; these read MPRP…PTAT and VKSQ…NPRI. Over residues 74–94 the composition is skewed to basic and acidic residues; the sequence is HTEGCHTHEANPEPNTKHTET. Pro residues predominate over residues 102-112; the sequence is CPPPHPGPTAT.

The protein belongs to the UPF0328 family.

The protein is UPF0328 protein ECU05_0030 of Encephalitozoon cuniculi (strain GB-M1) (Microsporidian parasite).